Consider the following 201-residue polypeptide: Natural cytotoxicity triggering receptor 3 (201 aa).

An N-terminal signal peptide occupies residues 1–18 (MAWMLLLILIMVHPGSCA). Residues 19 to 126 (LWVSQPPEIR…VGTGNGTRLV (108 aa)) enclose the Ig-like domain. The Extracellular segment spans residues 19-135 (LWVSQPPEIR…VVEKEHPQLG (117 aa)). C39 and C108 are disulfide-bonded. N-linked (GlcNAc...) asparagine glycans are attached at residues N42 and N121. Residues 136–156 (AGTVLLLRAGFYAVSFLSVAV) form a helical membrane-spanning segment. Residues 157-201 (GSTVYYQGKCLTWKGPRRQLPAVVPAPLPPPCGSSAHLLPPVPGG) lie on the Cytoplasmic side of the membrane.

It belongs to the natural cytotoxicity receptor (NCR) family. As to quaternary structure, homodimer in the unliganted form. Interacts with CD3Z. Interacts with and is activated by binding to NCR3LG1. Interacts with and is activated by binding to BAG6. Interacts with and is inhibited by binding to LGALS3. Selectively expressed by all resting and activated NK cells and weakly expressed in spleen.

It is found in the cell membrane. Functionally, cell membrane receptor of natural killer/NK cells that is activated by binding of extracellular ligands including BAG6 and NCR3LG1. Stimulates NK cells cytotoxicity toward neighboring cells producing these ligands. It controls, for instance, NK cells cytotoxicity against tumor cells. Engagement of NCR3 by BAG6 also promotes myeloid dendritic cells (DC) maturation, both through killing DCs that did not acquire a mature phenotype, and inducing the release by NK cells of TNFA and IFNG which promote DC maturation. The sequence is that of Natural cytotoxicity triggering receptor 3 from Homo sapiens (Human).